Consider the following 250-residue polypeptide: Triosephosphate isomerase (250 aa).

A substrate-binding site is contributed by 9 to 11 (NWK). H94 serves as the catalytic Electrophile. E166 acts as the Proton acceptor in catalysis. Residues G172, S211, and 232-233 (GG) each bind substrate.

It belongs to the triosephosphate isomerase family. Homodimer.

The protein resides in the cytoplasm. The enzyme catalyses D-glyceraldehyde 3-phosphate = dihydroxyacetone phosphate. It functions in the pathway carbohydrate biosynthesis; gluconeogenesis. It participates in carbohydrate degradation; glycolysis; D-glyceraldehyde 3-phosphate from glycerone phosphate: step 1/1. Its function is as follows. Involved in the gluconeogenesis. Catalyzes stereospecifically the conversion of dihydroxyacetone phosphate (DHAP) to D-glyceraldehyde-3-phosphate (G3P). The polypeptide is Triosephosphate isomerase (Methylococcus capsulatus (strain ATCC 33009 / NCIMB 11132 / Bath)).